Here is a 211-residue protein sequence, read N- to C-terminus: Thiamine-phosphate synthase (211 aa).

4-amino-2-methyl-5-(diphosphooxymethyl)pyrimidine contacts are provided by residues Q43–K47 and N75. Mg(2+)-binding residues include D76 and D95. Residue S114 participates in 4-amino-2-methyl-5-(diphosphooxymethyl)pyrimidine binding. T140–S142 provides a ligand contact to 2-[(2R,5Z)-2-carboxy-4-methylthiazol-5(2H)-ylidene]ethyl phosphate. K143 contributes to the 4-amino-2-methyl-5-(diphosphooxymethyl)pyrimidine binding site. Residues G170 and I190–S191 contribute to the 2-[(2R,5Z)-2-carboxy-4-methylthiazol-5(2H)-ylidene]ethyl phosphate site.

Belongs to the thiamine-phosphate synthase family. It depends on Mg(2+) as a cofactor.

It carries out the reaction 2-[(2R,5Z)-2-carboxy-4-methylthiazol-5(2H)-ylidene]ethyl phosphate + 4-amino-2-methyl-5-(diphosphooxymethyl)pyrimidine + 2 H(+) = thiamine phosphate + CO2 + diphosphate. The catalysed reaction is 2-(2-carboxy-4-methylthiazol-5-yl)ethyl phosphate + 4-amino-2-methyl-5-(diphosphooxymethyl)pyrimidine + 2 H(+) = thiamine phosphate + CO2 + diphosphate. The enzyme catalyses 4-methyl-5-(2-phosphooxyethyl)-thiazole + 4-amino-2-methyl-5-(diphosphooxymethyl)pyrimidine + H(+) = thiamine phosphate + diphosphate. It participates in cofactor biosynthesis; thiamine diphosphate biosynthesis; thiamine phosphate from 4-amino-2-methyl-5-diphosphomethylpyrimidine and 4-methyl-5-(2-phosphoethyl)-thiazole: step 1/1. Functionally, condenses 4-methyl-5-(beta-hydroxyethyl)thiazole monophosphate (THZ-P) and 2-methyl-4-amino-5-hydroxymethyl pyrimidine pyrophosphate (HMP-PP) to form thiamine monophosphate (TMP). This Coprothermobacter proteolyticus (strain ATCC 35245 / DSM 5265 / OCM 4 / BT) protein is Thiamine-phosphate synthase.